An 824-amino-acid chain; its full sequence is Phenylalanine--tRNA ligase beta subunit (824 aa).

Positions 39-153 (SEQAKNVVIG…NIPPIGSNAV (115 aa)) constitute a tRNA-binding domain. One can recognise a B5 domain in the interval 414-507 (KKSISVNLRM…RLIGYDNFDS (94 aa)). 4 residues coordinate Mg(2+): aspartate 485, aspartate 491, glutamate 494, and glutamate 495. The region spanning 730 to 823 (PTVPYMERDI…LKEKIKAELR (94 aa)) is the FDX-ACB domain.

It belongs to the phenylalanyl-tRNA synthetase beta subunit family. Type 1 subfamily. In terms of assembly, tetramer of two alpha and two beta subunits. Requires Mg(2+) as cofactor.

Its subcellular location is the cytoplasm. The enzyme catalyses tRNA(Phe) + L-phenylalanine + ATP = L-phenylalanyl-tRNA(Phe) + AMP + diphosphate + H(+). This is Phenylalanine--tRNA ligase beta subunit from Prochlorococcus marinus (strain NATL2A).